The following is a 277-amino-acid chain: Indole-3-glycerol phosphate synthase (277 aa).

It belongs to the TrpC family.

It catalyses the reaction 1-(2-carboxyphenylamino)-1-deoxy-D-ribulose 5-phosphate + H(+) = (1S,2R)-1-C-(indol-3-yl)glycerol 3-phosphate + CO2 + H2O. It participates in amino-acid biosynthesis; L-tryptophan biosynthesis; L-tryptophan from chorismate: step 4/5. In Pseudomonas putida (strain W619), this protein is Indole-3-glycerol phosphate synthase.